The following is a 130-amino-acid chain: Small ribosomal subunit protein uS9 (130 aa).

It belongs to the universal ribosomal protein uS9 family.

The protein is Small ribosomal subunit protein uS9 of Shewanella amazonensis (strain ATCC BAA-1098 / SB2B).